We begin with the raw amino-acid sequence, 283 residues long: Capsid fiber protein (283 aa).

It belongs to the phi29likevirus major capsid fiber protein family. In terms of assembly, homotrimer. Forms a super helix coiled coil in the homotrimer.

It is found in the virion. Protein that forms the 55 capsid fibers. These fibers are not always present and may have been lost in some lab strains. They may enhance the attachment of the virions onto the host cell wall. The chain is Capsid fiber protein (8.5) from Bacillus subtilis (Bacteriophage B103).